We begin with the raw amino-acid sequence, 553 residues long: Membrane protein insertase YidC (553 aa).

The chain crosses the membrane as a helical span at residues 3–23 (IKRTILWVIFSLSVVLLFDNW). Positions 44 to 64 (AAAPGGTPAGDVPKAAAPAAA) are disordered. A run of 4 helical transmembrane segments spans residues 359–379 (LLGN…LVFF), 429–449 (LGGC…YWVL), 467–487 (LASP…MFVQ), and 507–527 (PIAF…YWVV).

This sequence belongs to the OXA1/ALB3/YidC family. Type 1 subfamily. In terms of assembly, interacts with the Sec translocase complex via SecD. Specifically interacts with transmembrane segments of nascent integral membrane proteins during membrane integration.

Its subcellular location is the cell inner membrane. Its function is as follows. Required for the insertion and/or proper folding and/or complex formation of integral membrane proteins into the membrane. Involved in integration of membrane proteins that insert both dependently and independently of the Sec translocase complex, as well as at least some lipoproteins. Aids folding of multispanning membrane proteins. In Ralstonia nicotianae (strain ATCC BAA-1114 / GMI1000) (Ralstonia solanacearum), this protein is Membrane protein insertase YidC.